The primary structure comprises 353 residues: Uroporphyrinogen decarboxylase (353 aa).

Substrate contacts are provided by residues 30–34, Asp79, Tyr154, Ser209, and His332; that span reads RQAGR.

Belongs to the uroporphyrinogen decarboxylase family. As to quaternary structure, homodimer.

It localises to the cytoplasm. The catalysed reaction is uroporphyrinogen III + 4 H(+) = coproporphyrinogen III + 4 CO2. The protein operates within porphyrin-containing compound metabolism; protoporphyrin-IX biosynthesis; coproporphyrinogen-III from 5-aminolevulinate: step 4/4. Its function is as follows. Catalyzes the decarboxylation of four acetate groups of uroporphyrinogen-III to yield coproporphyrinogen-III. The polypeptide is Uroporphyrinogen decarboxylase (Mycobacterium ulcerans (strain Agy99)).